The following is a 73-amino-acid chain: Aminopeptidase G (73 aa).

A disordered region spans residues 39 to 73; it reads GRRAASSSWPGRGSSRRWRPGRRTGAAARGCWRAP. 2 stretches are compositionally biased toward low complexity: residues 42-51 and 61-73; these read AASSSWPGRG and RTGA…WRAP.

Belongs to the peptidase M1 family. Zn(2+) serves as cofactor.

The protein localises to the cytoplasm. Functionally, hydrolyzes preferentially the N-terminal glycine and can also hydrolyze other amino acids which are used by PepN but is unable to hydrolyze basic amino acids. The chain is Aminopeptidase G (pepG) from Streptomyces lividans.